The primary structure comprises 197 residues: Imidazoleglycerol-phosphate dehydratase (197 aa).

This sequence belongs to the imidazoleglycerol-phosphate dehydratase family.

The protein localises to the cytoplasm. The enzyme catalyses D-erythro-1-(imidazol-4-yl)glycerol 3-phosphate = 3-(imidazol-4-yl)-2-oxopropyl phosphate + H2O. Its pathway is amino-acid biosynthesis; L-histidine biosynthesis; L-histidine from 5-phospho-alpha-D-ribose 1-diphosphate: step 6/9. The protein is Imidazoleglycerol-phosphate dehydratase (hisB) of Streptomyces coelicolor (strain ATCC BAA-471 / A3(2) / M145).